Reading from the N-terminus, the 167-residue chain is Photosystem II extrinsic protein V (167 aa).

The first 30 residues, Met1–Ala30, serve as a signal peptide directing secretion. Cys67, Cys70, His71, and His122 together coordinate heme c.

It belongs to the cytochrome c family. PsbV subfamily. As to quaternary structure, PSII is composed of 1 copy each of membrane proteins PsbA, PsbB, PsbC, PsbD, PsbE, PsbF, PsbH, PsbI, PsbJ, PsbK, PsbL, PsbM, PsbT, PsbX, PsbY, PsbZ, Psb30/Ycf12, peripheral proteins PsbO, CyanoQ (PsbQ), PsbU, PsbV and a large number of cofactors. It forms dimeric complexes. Requires heme c as cofactor.

The protein localises to the cellular thylakoid membrane. Its function is as follows. One of the extrinsic, lumenal subunits of photosystem II (PSII). PSII is a light-driven water plastoquinone oxidoreductase, using light energy to abstract electrons from H(2)O, generating a proton gradient subsequently used for ATP formation. The extrinsic proteins stabilize the structure of photosystem II oxygen-evolving complex (OEC), the ion environment of oxygen evolution and protect the OEC against heat-induced inactivation. Low-potential cytochrome c that plays a role in the OEC of PSII. This chain is Photosystem II extrinsic protein V, found in Synechococcus elongatus (strain ATCC 33912 / PCC 7942 / FACHB-805) (Anacystis nidulans R2).